Reading from the N-terminus, the 196-residue chain is Imidazoleglycerol-phosphate dehydratase (196 aa).

It belongs to the imidazoleglycerol-phosphate dehydratase family.

It localises to the cytoplasm. It catalyses the reaction D-erythro-1-(imidazol-4-yl)glycerol 3-phosphate = 3-(imidazol-4-yl)-2-oxopropyl phosphate + H2O. It participates in amino-acid biosynthesis; L-histidine biosynthesis; L-histidine from 5-phospho-alpha-D-ribose 1-diphosphate: step 6/9. This Acidiphilium cryptum (strain JF-5) protein is Imidazoleglycerol-phosphate dehydratase.